The sequence spans 468 residues: Bifunctional protein GlmU (468 aa).

Residues 1-233 (MAQAGSASPL…LEEANLVNDR (233 aa)) are pyrophosphorylase. Residues 15–18 (LAAG), lysine 29, glutamine 79, and 84–85 (GT) each bind UDP-N-acetyl-alpha-D-glucosamine. Aspartate 109 is a binding site for Mg(2+). UDP-N-acetyl-alpha-D-glucosamine contacts are provided by glycine 146, glutamate 159, asparagine 174, and asparagine 231. Asparagine 231 is a Mg(2+) binding site. The linker stretch occupies residues 234–254 (SQLARAEEILRRRILDAHMKE). The N-acetyltransferase stretch occupies residues 255–468 (GVTVRDPVST…GDRRRARTEG (214 aa)). 2 residues coordinate UDP-N-acetyl-alpha-D-glucosamine: arginine 336 and lysine 354. Histidine 366 acts as the Proton acceptor in catalysis. UDP-N-acetyl-alpha-D-glucosamine contacts are provided by tyrosine 369 and asparagine 380. Acetyl-CoA is bound by residues alanine 383, 389–390 (NY), and alanine 426.

It in the N-terminal section; belongs to the N-acetylglucosamine-1-phosphate uridyltransferase family. The protein in the C-terminal section; belongs to the transferase hexapeptide repeat family. Homotrimer. It depends on Mg(2+) as a cofactor.

It localises to the cytoplasm. It carries out the reaction alpha-D-glucosamine 1-phosphate + acetyl-CoA = N-acetyl-alpha-D-glucosamine 1-phosphate + CoA + H(+). The enzyme catalyses N-acetyl-alpha-D-glucosamine 1-phosphate + UTP + H(+) = UDP-N-acetyl-alpha-D-glucosamine + diphosphate. It functions in the pathway nucleotide-sugar biosynthesis; UDP-N-acetyl-alpha-D-glucosamine biosynthesis; N-acetyl-alpha-D-glucosamine 1-phosphate from alpha-D-glucosamine 6-phosphate (route II): step 2/2. The protein operates within nucleotide-sugar biosynthesis; UDP-N-acetyl-alpha-D-glucosamine biosynthesis; UDP-N-acetyl-alpha-D-glucosamine from N-acetyl-alpha-D-glucosamine 1-phosphate: step 1/1. It participates in bacterial outer membrane biogenesis; LPS lipid A biosynthesis. Its function is as follows. Catalyzes the last two sequential reactions in the de novo biosynthetic pathway for UDP-N-acetylglucosamine (UDP-GlcNAc). The C-terminal domain catalyzes the transfer of acetyl group from acetyl coenzyme A to glucosamine-1-phosphate (GlcN-1-P) to produce N-acetylglucosamine-1-phosphate (GlcNAc-1-P), which is converted into UDP-GlcNAc by the transfer of uridine 5-monophosphate (from uridine 5-triphosphate), a reaction catalyzed by the N-terminal domain. This chain is Bifunctional protein GlmU, found in Rubrobacter xylanophilus (strain DSM 9941 / JCM 11954 / NBRC 16129 / PRD-1).